Here is a 136-residue protein sequence, read N- to C-terminus: MGLLSEFKAFAVKGNVVDMAVGIIIGAAFGKIVSSFVGDVIMPPIGLLIGGVDFSDLAITLKAEGDVPAVVLAYRKFIQTVLNFVIVAFAIFMGVKAINRLKREEAVAPSEPPVPSAEETLLTEIRDLLKAQQNKS.

Residues 1–16 (MGLLSEFKAFAVKGNV) lie on the Cytoplasmic side of the membrane. Residues 17 to 45 (VDMAVGIIIGAAFGKIVSSFVGDVIMPPI) form a helical membrane-spanning segment. Over 46 to 73 (GLLIGGVDFSDLAITLKAEGDVPAVVLA) the chain is Extracellular. Residues 74 to 93 (YRKFIQTVLNFVIVAFAIFM) form a helical membrane-spanning segment. Over 94–136 (GVKAINRLKREEAVAPSEPPVPSAEETLLTEIRDLLKAQQNKS) the chain is Cytoplasmic.

This sequence belongs to the MscL family. In terms of assembly, homopentamer.

The protein localises to the cell inner membrane. Functionally, channel that opens in response to stretch forces in the membrane lipid bilayer. Forms a nonselective ion channel with a conductance of about 4 nanosiemens. May participate in the regulation of osmotic pressure changes within the cell. In Pseudomonas fluorescens, this protein is Large-conductance mechanosensitive channel.